A 218-amino-acid chain; its full sequence is Small ribosomal subunit protein uS3 (218 aa).

The 69-residue stretch at 38-106 (IREYINKRLQ…RVHINIVEIK (69 aa)) folds into the KH type-2 domain.

Belongs to the universal ribosomal protein uS3 family. Part of the 30S ribosomal subunit. Forms a tight complex with proteins S10 and S14.

In terms of biological role, binds the lower part of the 30S subunit head. Binds mRNA in the 70S ribosome, positioning it for translation. The protein is Small ribosomal subunit protein uS3 of Geobacillus sp. (strain WCH70).